Reading from the N-terminus, the 126-residue chain is Holo-[acyl-carrier-protein] synthase (126 aa).

The Mg(2+) site is built by Asp-9 and Glu-58.

It belongs to the P-Pant transferase superfamily. AcpS family. Homodimer. The cofactor is Mg(2+).

The protein resides in the cytoplasm. The enzyme catalyses apo-[ACP] + CoA = holo-[ACP] + adenosine 3',5'-bisphosphate + H(+). Transfers the 4'-phosphopantetheine moiety from coenzyme A to the 'Ser-36' of acyl-carrier-protein. The polypeptide is Holo-[acyl-carrier-protein] synthase (Escherichia coli O157:H7).